Reading from the N-terminus, the 105-residue chain is Large ribosomal subunit protein uL24 (105 aa).

It belongs to the universal ribosomal protein uL24 family. In terms of assembly, part of the 50S ribosomal subunit.

In terms of biological role, one of two assembly initiator proteins, it binds directly to the 5'-end of the 23S rRNA, where it nucleates assembly of the 50S subunit. One of the proteins that surrounds the polypeptide exit tunnel on the outside of the subunit. In Aeromonas salmonicida (strain A449), this protein is Large ribosomal subunit protein uL24.